The following is a 163-amino-acid chain: MGELADPVVIGTITAPHGVRGTVRVRPAGEGRHLREGLSPLVGGRRRRILRARRTPKGFLVDLEGVPDRFRAAELRGEDLLLDRSELDAPEEDEFYVADLVGLEAVDERGGALGEVIETFPTPAHEVLVVRGEGGLLYVPFTREHVPEVDPRAGRAVVRPPEE.

The region spanning 92–162 (EDEFYVADLV…AGRAVVRPPE (71 aa)) is the PRC barrel domain.

Belongs to the RimM family. As to quaternary structure, binds ribosomal protein uS19.

The protein localises to the cytoplasm. In terms of biological role, an accessory protein needed during the final step in the assembly of 30S ribosomal subunit, possibly for assembly of the head region. Essential for efficient processing of 16S rRNA. May be needed both before and after RbfA during the maturation of 16S rRNA. It has affinity for free ribosomal 30S subunits but not for 70S ribosomes. The sequence is that of Ribosome maturation factor RimM from Rubrobacter xylanophilus (strain DSM 9941 / JCM 11954 / NBRC 16129 / PRD-1).